The chain runs to 347 residues: NADH-ubiquinone oxidoreductase chain 2 (347 aa).

A run of 11 helical transmembrane segments spans residues methionine 1–threonine 21, histidine 25–methionine 45, tyrosine 59–methionine 79, methionine 96–proline 116, valine 122–leucine 142, valine 149–glycine 169, isoleucine 178–proline 198, serine 201–phenylalanine 221, alanine 237–leucine 257, asparagine 274–methionine 294, and methionine 326–leucine 346.

The protein belongs to the complex I subunit 2 family. As to quaternary structure, core subunit of respiratory chain NADH dehydrogenase (Complex I) which is composed of 45 different subunits. Interacts with TMEM242.

It localises to the mitochondrion inner membrane. The catalysed reaction is a ubiquinone + NADH + 5 H(+)(in) = a ubiquinol + NAD(+) + 4 H(+)(out). Functionally, core subunit of the mitochondrial membrane respiratory chain NADH dehydrogenase (Complex I) that is believed to belong to the minimal assembly required for catalysis. Complex I functions in the transfer of electrons from NADH to the respiratory chain. The immediate electron acceptor for the enzyme is believed to be ubiquinone. The sequence is that of NADH-ubiquinone oxidoreductase chain 2 from Crocidura suaveolens gueldenstaedtii (Gueldenstaedt's shrew).